Reading from the N-terminus, the 605-residue chain is UvrABC system protein C (605 aa).

The region spanning Gln-14–Ile-92 is the GIY-YIG domain. A UVR domain is found at Lys-202–Ile-237.

This sequence belongs to the UvrC family. Interacts with UvrB in an incision complex.

It localises to the cytoplasm. Its function is as follows. The UvrABC repair system catalyzes the recognition and processing of DNA lesions. UvrC both incises the 5' and 3' sides of the lesion. The N-terminal half is responsible for the 3' incision and the C-terminal half is responsible for the 5' incision. This chain is UvrABC system protein C, found in Wolbachia pipientis subsp. Culex pipiens (strain wPip).